Reading from the N-terminus, the 29-residue chain is Cyclotide mden-F (29 aa).

The segment at residues 1–29 (GLPICGETCFFGKCNTPKCTCINPICYKN) is a cross-link (cyclopeptide (Gly-Asn)). Disulfide bonds link C5–C19, C9–C21, and C14–C26.

This sequence belongs to the cyclotide family. This is a cyclic peptide.

Its function is as follows. Probably participates in a plant defense mechanism. This is Cyclotide mden-F from Melicytus dentatus (Tree violet).